Reading from the N-terminus, the 915-residue chain is Probable dipeptidyl-aminopeptidase B (915 aa).

2 disordered regions span residues 1–20 (MAGEKGGSRDEEREPLTRGS) and 52–74 (QDSRLGEKDQRDDDHDQYRNEEE). The Cytoplasmic segment spans residues 1–95 (MAGEKGGSRD…GGKTVQKTTK (95 aa)). A compositionally biased stretch (basic and acidic residues) spans 55-72 (RLGEKDQRDDDHDQYRNE). A helical; Signal-anchor for type II membrane protein membrane pass occupies residues 96 to 116 (IVLWALLFLCVGGWSLAFVIF). The Vacuolar portion of the chain corresponds to 117–915 (LFRGHDTPQT…RAETWGGLPV (799 aa)). 4 N-linked (GlcNAc...) asparagine glycosylation sites follow: Asn133, Asn179, Asn349, and Asn572. The active-site Charge relay system is Ser754. Asn813 is a glycosylation site (N-linked (GlcNAc...) asparagine). Residues Asp831 and His864 each act as charge relay system in the active site. Asn900 is a glycosylation site (N-linked (GlcNAc...) asparagine).

This sequence belongs to the peptidase S9B family.

Its subcellular location is the vacuole membrane. The enzyme catalyses Release of an N-terminal dipeptide, Xaa-Yaa-|-Zaa-, from a polypeptide, preferentially when Yaa is Pro, provided Zaa is neither Pro nor hydroxyproline.. In terms of biological role, type IV dipeptidyl-peptidase which removes N-terminal dipeptides sequentially from polypeptides having unsubstituted N-termini provided that the penultimate residue is proline. The protein is Probable dipeptidyl-aminopeptidase B (DAPB) of Blastomyces gilchristii (strain SLH14081) (Blastomyces dermatitidis).